The primary structure comprises 182 residues: Fucoxanthin-chlorophyll a-c binding protein D, chloroplastic (182 aa).

A chloroplast-targeting transit peptide spans 1–4 (AMKM). The next 3 membrane-spanning stretches (helical) occupy residues 46 to 66 (IAML…PGML), 87 to 107 (IPPG…LAVM), and 148 to 168 (GRAA…NNKP).

The protein belongs to the fucoxanthin chlorophyll protein family. As to quaternary structure, the LHC complex of chromophytic algae is composed of fucoxanthin, chlorophyll A and C bound non-covalently by fucoxanthin chlorophyll proteins (FCPs). The ratio of pigments in this LHC is; fucoxanthin: chlorophyll C: chlorophyll A; (0.6-1): (0.1-0.3): (1).

The protein resides in the plastid. It is found in the chloroplast thylakoid membrane. The light-harvesting complex (LHC) functions as a light receptor, it captures and delivers excitation energy to photosystems with which it is closely associated. Energy is transferred from the carotenoid and chlorophyll C (or B) to chlorophyll A and the photosynthetic reaction centers where it is used to synthesize ATP and reducing power. This is Fucoxanthin-chlorophyll a-c binding protein D, chloroplastic (FCPD) from Macrocystis pyrifera (Giant kelp).